The following is a 137-amino-acid chain: TM2 domain-containing protein DDB_G0287015 (137 aa).

In terms of domain architecture, TM2 spans 9 to 57 (QASLVVAYLLLIFLGFFGVHRFYVGRTISGVVYLLTGGIFGIGYIVDFF). 2 helical membrane passes run 12 to 32 (LVVAYLLLIFLGFFGVHRFYV) and 39 to 59 (VVYLLTGGIFGIGYIVDFFLL). Residues 106–137 (IQPQQQQYYQQPYQQQQYQPQPYQPNSPQYQP) form a disordered region.

Belongs to the TM2 family.

The protein localises to the membrane. The polypeptide is TM2 domain-containing protein DDB_G0287015 (Dictyostelium discoideum (Social amoeba)).